The sequence spans 236 residues: Ribosome assembly factor mrt4 (236 aa).

Belongs to the universal ribosomal protein uL10 family. As to quaternary structure, associates with the pre-60S ribosomal particle.

It localises to the nucleus. The protein resides in the nucleolus. The protein localises to the cytoplasm. Component of the ribosome assembly machinery. Nuclear paralog of the ribosomal protein P0, it binds pre-60S subunits at an early stage of assembly in the nucleolus, and is replaced by P0 in cytoplasmic pre-60S subunits and mature 80S ribosomes. The sequence is that of Ribosome assembly factor mrt4 from Eremothecium gossypii (strain ATCC 10895 / CBS 109.51 / FGSC 9923 / NRRL Y-1056) (Yeast).